The primary structure comprises 706 residues: Probable tape measure protein (706 aa).

Residues 9-113 are a coiled coil; it reads QAELETKGVL…TRLSTELAKV (105 aa). EF-hand domains are found at residues 271–290, 361–380, and 496–521; these read GSGT…ALGA, KDGQ…GFTS, and KIID…AKDA. Ca(2+) is bound by residues Asp-499, Asn-501, Asp-503, Lys-505, and Glu-510.

This sequence belongs to the Mulikevirus tape measure protein family.

Its function is as follows. Serves as a base for tail tube protein polymerization and acts as a template for tail length determination. The polypeptide is Probable tape measure protein (Lactococcus phage c2).